A 534-amino-acid chain; its full sequence is Multicopper oxidase LPR1 homolog 3 (534 aa).

Histidine 84 and histidine 86 together coordinate Cu cation. Residue asparagine 109 is glycosylated (N-linked (GlcNAc...) asparagine). 2 residues coordinate Cu cation: histidine 133 and histidine 135. In terms of domain architecture, Plastocyanin-like spans 219–291 (PFQAVQRRRY…VDFSLVVNPN (73 aa)). Asparagine 234, asparagine 291, asparagine 312, asparagine 323, asparagine 341, and asparagine 372 each carry an N-linked (GlcNAc...) asparagine glycan. Residues histidine 419, histidine 422, and histidine 424 each coordinate Cu cation. Residue asparagine 450 is glycosylated (N-linked (GlcNAc...) asparagine). Residues histidine 515, cysteine 516, histidine 517, histidine 521, and methionine 526 each coordinate Cu cation.

This sequence belongs to the multicopper oxidase family. Cu cation is required as a cofactor. As to expression, expressed in roots and basal stems.

It is found in the endoplasmic reticulum membrane. In terms of biological role, multicopper oxidase that may play a role in the maintenance of inorganic phosphate homeostasis. The sequence is that of Multicopper oxidase LPR1 homolog 3 from Oryza sativa subsp. japonica (Rice).